We begin with the raw amino-acid sequence, 723 residues long: Fatty acid oxidation complex subunit alpha (723 aa).

Residues 1–189 form an enoyl-CoA hydratase/isomerase region; the sequence is MIYQAKTLQV…KVGLLDAIVD (189 aa). Aspartate 296 contributes to the substrate binding site. The tract at residues 311–723 is 3-hydroxyacyl-CoA dehydrogenase; sequence SQDTQHAAVL…FYSAQQVSAL (413 aa). Residues methionine 325, aspartate 344, 401 to 403, lysine 408, and serine 430 each bind NAD(+); that span reads VVE. The active-site For 3-hydroxyacyl-CoA dehydrogenase activity is the histidine 451. Asparagine 454 is a binding site for NAD(+). Positions 501 and 661 each coordinate substrate.

The protein in the N-terminal section; belongs to the enoyl-CoA hydratase/isomerase family. In the C-terminal section; belongs to the 3-hydroxyacyl-CoA dehydrogenase family. As to quaternary structure, heterotetramer of two alpha chains (FadB) and two beta chains (FadA).

It carries out the reaction a (3S)-3-hydroxyacyl-CoA + NAD(+) = a 3-oxoacyl-CoA + NADH + H(+). It catalyses the reaction a (3S)-3-hydroxyacyl-CoA = a (2E)-enoyl-CoA + H2O. The catalysed reaction is a 4-saturated-(3S)-3-hydroxyacyl-CoA = a (3E)-enoyl-CoA + H2O. The enzyme catalyses (3S)-3-hydroxybutanoyl-CoA = (3R)-3-hydroxybutanoyl-CoA. It carries out the reaction a (3Z)-enoyl-CoA = a 4-saturated (2E)-enoyl-CoA. It catalyses the reaction a (3E)-enoyl-CoA = a 4-saturated (2E)-enoyl-CoA. It functions in the pathway lipid metabolism; fatty acid beta-oxidation. Involved in the aerobic and anaerobic degradation of long-chain fatty acids via beta-oxidation cycle. Catalyzes the formation of 3-oxoacyl-CoA from enoyl-CoA via L-3-hydroxyacyl-CoA. It can also use D-3-hydroxyacyl-CoA and cis-3-enoyl-CoA as substrate. The sequence is that of Fatty acid oxidation complex subunit alpha from Vibrio cholerae serotype O1 (strain ATCC 39315 / El Tor Inaba N16961).